Consider the following 160-residue polypeptide: Serine-protein kinase RsbW (160 aa).

It belongs to the anti-sigma-factor family.

The enzyme catalyses L-seryl-[protein] + ATP = O-phospho-L-seryl-[protein] + ADP + H(+). It carries out the reaction L-threonyl-[protein] + ATP = O-phospho-L-threonyl-[protein] + ADP + H(+). Negative regulator of sigma-B activity. Phosphorylates and inactivates its specific antagonist protein, RsbV. Upon phosphorylation of RsbV, RsbW is released and binds to sigma-B, thereby blocking its ability to form an RNA polymerase holoenzyme (E-sigma-B). The sequence is that of Serine-protein kinase RsbW from Bacillus anthracis (strain A0248).